The primary structure comprises 343 residues: Heat-inducible transcription repressor HrcA (343 aa).

It belongs to the HrcA family.

In terms of biological role, negative regulator of class I heat shock genes (grpE-dnaK-dnaJ and groELS operons). Prevents heat-shock induction of these operons. The polypeptide is Heat-inducible transcription repressor HrcA (Phytoplasma mali (strain AT)).